The chain runs to 607 residues: MPYELKKVFASLPQVERGVAKIITGDPKGNNFLYTNGKSVIIRNIENPAIADIYTEHAHPVVVARYAPSGFYIASGDTSGKLRIWDTTQKEHLLKYEYQPFAGKIKDIAWTEDSKRIAVVGEGREKFGSVFLWDTGSSVGEISGNIKVINSVDIKQTRPYRLVTGSDDNCCAFFEGPPFKFKFTMADHSRFVNCVRFSPDGSRLASAGADGQIFLYDGKTGEKVGNLGGSKAHDGGIYAVSWSADSTQLLSASGDKTAKIWDVAANSAVTTFHLGTEVLDQQLGCLWQKDYLLSVSLSGYINYLDKNNPSRPLRVIKGHNKSIQCMTVHNSDGRSTIYTGSHDGHINYWDAETGENDTFTGKGHTNQVSRMDLDSSNQLITCSMDDTVRYTSLTSKDYSSSESVKMDVQPKCVAVGSGGYVVTLCIGQIVLLKDKKKVFAIDSLDYEPEAVAIHKGSGTVAVGGVDGNVHLYSIQGNSLKDEGKSLPVKGAVTDLAYSHDGAFLAVTDANKVVTVFNVADGYSEQNVYYGHHAKAVSVAWSPDNEHFASSGMDMMVYVWTLSDPDARIKIPDAHRLHHVSSLAWLDEHTLATVSHDACVKQWTVTFK.

WD repeat units lie at residues 4–45 (ELKK…IRNI), 48–87 (PAIADIYTEHAHPVVVARYAPSGFYIASGDTSGKLRIWDT), 93–135 (LLKY…LWDT), 138–176 (SVGEISGNIKVINSVDIKQTRPYRLVTGSDDNCCAFFEG), 180–218 (KFKFTMADHSRFVNCVRFSPDGSRLASAGADGQIFLYDG), 224–263 (VGNLGGSKAHDGGIYAVSWSADSTQLLSASGDKTAKIWDV), 270–306 (TTFHLGTEVLDQQLGCLWQKDYLLSVSLSGYINYLDK), 311–351 (RPLR…YWDA), 358–408 (TFTG…KMDV), 432–474 (LKDK…LYSI), 480–518 (KDEGKSLPVKGAVTDLAYSHDGAFLAVTDANKVVTVFNV), 523–561 (SEQNVYYGHHAKAVSVAWSPDNEHFASSGMDMMVYVWTL), and 566–604 (ARIKIPDAHRLHHVSSLAWLDEHTLATVSHDACVKQWTV).

This sequence belongs to the WD repeat AIP1 family.

It is found in the cell membrane. The protein resides in the cytoplasm. It localises to the cytoskeleton. Its subcellular location is the nucleus. Induces disassembly of actin filaments in conjunction with ADF/cofilin family proteins. Doesn't sever actin filaments alone, but caps the barbed ends of filaments severed by cofilin, which blocks annealing and depolymerization and allows more extensive severing by cofilin. This Xenopus tropicalis (Western clawed frog) protein is WD repeat-containing protein 1.